The chain runs to 496 residues: Aspartic proteinase (496 aa).

An N-terminal signal peptide occupies residues 1–24 (MAKRHLLLVTTCLWALSCALLLHA). A propeptide spans 25–59 (SSDGFLRVNLNKKRLDKEDLTAAKLAQQGNRLLKT) (activation peptide). Positions 77–493 (YYGVIGLGSP…DFGKDRIGFA (417 aa)) constitute a Peptidase A1 domain. Residue D95 is part of the active site. Disulfide bonds link C108/C114 and C273/C277. D282 is a catalytic residue. The Saposin B-type domain occupies 307 to 407 (IISTECKEVV…NQLCERLPSP (101 aa)). 4 disulfide bridges follow: C312-C401, C337-C373, C343-C370, and C415-C452. N387 carries N-linked (GlcNAc...) asparagine glycosylation.

Belongs to the peptidase A1 family.

It localises to the vacuole. Its function is as follows. Involved in the breakdown of propeptides of storage proteins in protein-storage vacuoles. The sequence is that of Aspartic proteinase (RAP) from Oryza sativa subsp. japonica (Rice).